Consider the following 358-residue polypeptide: Protein RecA (358 aa).

69-76 contributes to the ATP binding site; sequence GPESSGKT.

The protein belongs to the RecA family.

The protein resides in the cytoplasm. Can catalyze the hydrolysis of ATP in the presence of single-stranded DNA, the ATP-dependent uptake of single-stranded DNA by duplex DNA, and the ATP-dependent hybridization of homologous single-stranded DNAs. It interacts with LexA causing its activation and leading to its autocatalytic cleavage. This is Protein RecA from Trichormus variabilis (strain ATCC 29413 / PCC 7937) (Anabaena variabilis).